Here is a 116-residue protein sequence, read N- to C-terminus: Protein lin-52 homolog (116 aa).

Phosphoserine is present on residues serine 28 and serine 53.

This sequence belongs to the lin-52 family. In terms of assembly, component of the DREAM complex (also named LINC complex) at least composed of E2F4, E2F5, LIN9, LIN37, LIN52, LIN54, MYBL1, MYBL2, RBL1, RBL2, RBBP4, TFDP1 and TFDP2. The complex exists in quiescent cells where it represses cell cycle-dependent genes. It dissociates in S phase when LIN9, LIN37, LIN52 and LIN54 form a subcomplex that binds to MYBL2.

The protein is Protein lin-52 homolog (LIN52) of Homo sapiens (Human).